The sequence spans 1877 residues: Transmembrane protein 131 (1877 aa).

The N-terminal stretch at 1–20 (MGKRAGGAAAAAAAASTSSA) is a signal peptide. Residues 21 to 1115 (AGLEPAAGRG…AEALPRPNWE (1095 aa)) lie on the Lumenal side of the membrane. A papD-L domain region spans residues 107-281 (RFEPPMLDFH…ETKGVMRASF (175 aa)). A helical transmembrane segment spans residues 1116–1136 (LALYIIISGVMSALFLLVIGT). The Cytoplasmic segment spans residues 1137–1877 (AYLEAQGIWE…WSNSHFPHEN (741 aa)). A compositionally biased stretch (polar residues) spans 1197–1227 (NASSRPGTGSHRQCGTSVHPHSSHGSKNSAD). Disordered stretches follow at residues 1197-1573 (NASS…SSST), 1590-1655 (LKQR…NPTF), 1679-1707 (SDFS…SPVS), and 1830-1852 (NSAA…TYNP). Residues 1233-1258 (TRNSSSMSSRTSPQAAASQSTSKTSP) show a composition bias toward low complexity. The segment covering 1301–1311 (QPPPPVPQHQE) has biased composition (pro residues). Ser-1318 and Ser-1338 each carry phosphoserine. Composition is skewed to basic and acidic residues over residues 1326-1339 (SHPE…HSSE) and 1349-1360 (AMDKDFDHHDSS). A Phosphoserine modification is found at Ser-1371. The segment covering 1376–1391 (SKGKGKSLQQRKAKPP) has biased composition (basic residues). Residues 1392–1414 (KKQEEKEKRGKGKPQEDELKDAL) show a composition bias toward basic and acidic residues. The segment covering 1420–1432 (SSTTTETSNPDTE) has biased composition (low complexity). Composition is skewed to polar residues over residues 1507 to 1523 (TLAS…TKGT) and 1538 to 1550 (LPSS…TSSS). The segment covering 1599-1608 (PASPSLPTAP) has biased composition (pro residues). Residues 1609 to 1646 (CPFTSRGSYSSVVNSSGSDTKAKQTSSSKSKLTKAASL) show a composition bias toward low complexity. Residues 1830 to 1839 (NSAAAHTPSA) are compositionally biased toward polar residues. 2 positions are modified to phosphoserine: Ser-1857 and Ser-1865.

It belongs to the TMEM131 family. In terms of assembly, interacts (via PapD-L domain) with COL1A2 (via C-terminus); the interaction is direct, may occur with other collagen proteins, and is involved in assembly and TRAPPIII ER-to-Golgi transport complex-dependent secretion of collagen. Interacts (via C-terminus) with TRAPPC8 (via C-terminus); the interaction is direct.

Its subcellular location is the membrane. In terms of biological role, collagen binding transmembrane protein involved in collagen secretion by recruiting the ER-to-Golgi transport complex TRAPPIII. May play a role in the immune response to viral infection. This chain is Transmembrane protein 131, found in Mus musculus (Mouse).